Consider the following 172-residue polypeptide: Zinc finger protein 580 (172 aa).

The disordered stretch occupies residues 1–92 (MLLLPPRPPH…PGEPGPRKGY (92 aa)). Positions 19-30 (MDPPPPKTPPFP) are enriched in pro residues. A Glycyl lysine isopeptide (Lys-Gly) (interchain with G-Cter in SUMO2) cross-link involves residue Lys31. A C2H2-type 1 zinc finger spans residues 92-114 (YSCPECARVFASPLRLQSHRVSH). Lys118 is covalently cross-linked (Glycyl lysine isopeptide (Lys-Gly) (interchain with G-Cter in SUMO2)). C2H2-type zinc fingers lie at residues 120-142 (FTCG…RATH) and 150-172 (HTCP…VRLH).

Interacts with SMAD2.

It localises to the nucleus. In terms of biological role, involved in the regulation of endothelial cell proliferation and migration. Mediates H(2)O(2)-induced leukocyte chemotaxis by elevating interleukin-8 production and may play a role in inflammation. May be involved in transcriptional regulation. In Mus musculus (Mouse), this protein is Zinc finger protein 580 (Znf580).